The sequence spans 160 residues: Transcription antitermination protein NusB (160 aa).

It belongs to the NusB family.

In terms of biological role, involved in transcription antitermination. Required for transcription of ribosomal RNA (rRNA) genes. Binds specifically to the boxA antiterminator sequence of the ribosomal RNA (rrn) operons. The sequence is that of Transcription antitermination protein NusB from Sinorhizobium medicae (strain WSM419) (Ensifer medicae).